The following is a 428-amino-acid chain: MCIAMAPRTLLLLIXCQLVFGFNEPLNIVSHLNDDWFLFGDSRSDCTYVENNGHPKLDWLDLDPKLCNSGKISAKSGNSLFRSFHFTDFYNYTGEGDQIVFYEGVNFSPSHGFKCLAHGDNKRWMGNKARFYARVYEKMAQYRSLSFVNVSYAYGGNAKPASICKDNTLTLNNPTFISKESNYVDYYYESEANFTLEGCDEFIVPLCGFNGHSKGSSSDAANKYYTDSQSYYNMDIGVLYGFNSTLDVGNTAKDPGLDLTCRYLALTPGNYKAVSLEYLLSLPSKAICLHKTKRFMPVQVVDSRWSSIRQSDNMTAAACQLPYCFFRNTSANYSGGTHDAHHGDFHFRQLLSGLLYNVSCIAQQGAFLYNNVSSSWPAYGYGHCPTAANIGYMAPVCIYDPLPVILLGVLLGIAVLIIVFLNVLFYDG.

A signal peptide spans 1–19 (MCIAMAPRTLLLLIXCQLV). An esterase domain 1 region spans residues 9–129 (TLLLLIXCQL…DNKRWMGNKA (121 aa)). Topologically, residues 20 to 404 (FGFNEPLNIV…PVCIYDPLPV (385 aa)) are virion surface. S42 (nucleophile) is an active-site residue. C46 and C67 are disulfide-bonded. N-linked (GlcNAc...) asparagine; by host glycans are attached at residues N91, N149, N193, N243, and N313. C115 and C164 form a disulfide bridge. The segment at 130–278 (RFYARVYEKM…GNYKAVSLEY (149 aa)) is receptor binding. Cystine bridges form between C199–C288 and C207–C261. The tract at residues 279-392 (LLSLPSKAIC…HCPTAANIGY (114 aa)) is esterase domain 2. C319 and C324 are disulfide-bonded. Residues N328 and N332 are each glycosylated (N-linked (GlcNAc...) asparagine; by host). Catalysis depends on charge relay system residues D339 and H342. Residues N357 and N371 are each glycosylated (N-linked (GlcNAc...) asparagine; by host). C360 and C384 form a disulfide bridge. Residues 405 to 425 (ILLGVLLGIAVLIIVFLNVLF) form a helical membrane-spanning segment. Residues 426-428 (YDG) lie on the Intravirion side of the membrane.

It belongs to the influenza type C/coronaviruses hemagglutinin-esterase family. In terms of assembly, homodimer; disulfide-linked. Forms a complex with the M protein in the pre-Golgi. Associates then with S-M complex to form a ternary complex S-M-HE. Post-translationally, N-glycosylated in the RER. In terms of processing, N-glycosylated in the host RER.

Its subcellular location is the virion membrane. It localises to the host cell membrane. The catalysed reaction is N-acetyl-9-O-acetylneuraminate + H2O = N-acetylneuraminate + acetate + H(+). It catalyses the reaction N-acetyl-4-O-acetylneuraminate + H2O = N-acetylneuraminate + acetate + H(+). Structural protein that makes short spikes at the surface of the virus. Contains receptor binding and receptor-destroying activities. Mediates de-O-acetylation of N-acetyl-4-O-acetylneuraminic acid, which is probably the receptor determinant recognized by the virus on the surface of erythrocytes and susceptible cells. This receptor-destroying activity is important for virus release as it probably helps preventing self-aggregation and ensures the efficient spread of the progeny virus from cell to cell. May serve as a secondary viral attachment protein for initiating infection, the spike protein being the major one. May become a target for both the humoral and the cellular branches of the immune system. This chain is Hemagglutinin-esterase, found in Mus musculus (Mouse).